A 1098-amino-acid chain; its full sequence is Tudor domain-containing protein 7 (1098 aa).

An HTH OST-type 1 domain is found at Glu-3–Ala-76. Positions Ala-129–Ala-156 are disordered. The HTH OST-type 2 domain occupies Lys-233–Lys-302. Ser-319 bears the Phosphoserine mark. The 70-residue stretch at Met-337 to Leu-406 folds into the HTH OST-type 3 domain. Tudor domains are found at residues Ala-513–Leu-570 and Leu-703–Glu-760. Residues Ser-855 to Gly-874 form a disordered region. At Ser-859 the chain carries Phosphoserine. The segment at Asn-861–Asn-1098 is interaction with CDK17. Residues Thr-893–Asn-1098 are interaction with CABLES1.

The protein belongs to the TDRD7 family. In terms of assembly, found in a mRNP complex, at least composed of TDRD1, TDRD6, TDRD7 and DDX4. Found in a complex containing CABLES1, CDK16 and CDK17. Interacts with CABLES1, CDK17 and PIWIL1.

The protein localises to the cytoplasm. In terms of biological role, component of specific cytoplasmic RNA granules involved in post-transcriptional regulation of specific genes: probably acts by binding to specific mRNAs and regulating their translation. Required for lens transparency during lens development, by regulating translation of genes such as CRYBB3 and HSPB1 in the developing lens. Also required during spermatogenesis. This is Tudor domain-containing protein 7 (TDRD7) from Homo sapiens (Human).